We begin with the raw amino-acid sequence, 300 residues long: MHDFPNIDFTQRFIFDESDVRGELVALERSYAEVLAKHPYPEPVAQLLGELMAAAALLVGTLKFDGLLILQARSSGAVPLLMVECSSERELRGIARYDEALVTAGAGLQDLMPDGSLALTIDPNKGKRYQGIVALDGVDLSESLSNYFVMSEQLGTRFWLKADGHRARGLLLQQLPIAQITDPEERDASWEHVITLANTLTAEEMLGLDNQTILHRLYHEDPVRLFDEQPICFRCSCSRERSANALASLGLEDAQQLVIEHNGTIEIDCQFCNQRYLFDATDVAQLFAGGGVDSPSDTRH.

Intrachain disulfides connect Cys235–Cys237 and Cys269–Cys272.

The protein belongs to the HSP33 family. Post-translationally, under oxidizing conditions two disulfide bonds are formed involving the reactive cysteines. Under reducing conditions zinc is bound to the reactive cysteines and the protein is inactive.

It localises to the cytoplasm. In terms of biological role, redox regulated molecular chaperone. Protects both thermally unfolding and oxidatively damaged proteins from irreversible aggregation. Plays an important role in the bacterial defense system toward oxidative stress. The sequence is that of 33 kDa chaperonin from Pseudomonas syringae pv. syringae (strain B728a).